Reading from the N-terminus, the 498-residue chain is Envelop protein OPG153 (498 aa).

An intrachain disulfide couples Cys-43 to Cys-342. Positions 352–391 (ATDTGHHQDSKINIKDDDVDDDDYNPKPTPIPEPYPRPPF) are disordered. The span at 355–367 (TGHHQDSKINIKD) shows a compositional bias: basic and acidic residues. Positions 378 to 390 (KPTPIPEPYPRPP) are enriched in pro residues.

This sequence belongs to the orthopoxvirus OPG153 protein family. In terms of assembly, interacts with proteins OPG094 and OPG143. Interacts with OPG154. Interacts with OPG152. Interacts with host laminin.

The protein localises to the virion membrane. Its function is as follows. Envelop protein that mediates acid-dependent endocytosis into host cells. Plays an important role in endocytic entry of the virus by acting as an acid-sensitive membrane fusion suppressor. Low pH in host endosomes triggers conformational changes to allow de-repression of viral fusion complex activity and membrane fusion within vesicles. Also plays a role in bridging the mature virion with structural protein OPG152. The sequence is that of Envelop protein OPG153 (Protein OPG153) from Variola virus (isolate Human/India/Ind3/1967) (VARV).